A 198-amino-acid polypeptide reads, in one-letter code: Recombination protein RecR (198 aa).

The C4-type zinc finger occupies 58–73 (CSICGNFTDSDPCAIC). The Toprim domain occupies 81 to 175 (SIICVIEEPK…KVTRIAHGIP (95 aa)).

The protein belongs to the RecR family.

May play a role in DNA repair. It seems to be involved in an RecBC-independent recombinational process of DNA repair. It may act with RecF and RecO. This Clostridium kluyveri (strain NBRC 12016) protein is Recombination protein RecR.